The following is a 141-amino-acid chain: Nucleoside diphosphate kinase (141 aa).

Lys11, Phe59, Arg87, Thr93, Arg104, and Asn114 together coordinate ATP. His117 functions as the Pros-phosphohistidine intermediate in the catalytic mechanism.

It belongs to the NDK family. As to quaternary structure, homotetramer. Requires Mg(2+) as cofactor.

The protein resides in the cytoplasm. It catalyses the reaction a 2'-deoxyribonucleoside 5'-diphosphate + ATP = a 2'-deoxyribonucleoside 5'-triphosphate + ADP. The catalysed reaction is a ribonucleoside 5'-diphosphate + ATP = a ribonucleoside 5'-triphosphate + ADP. In terms of biological role, major role in the synthesis of nucleoside triphosphates other than ATP. The ATP gamma phosphate is transferred to the NDP beta phosphate via a ping-pong mechanism, using a phosphorylated active-site intermediate. The chain is Nucleoside diphosphate kinase from Histophilus somni (strain 2336) (Haemophilus somnus).